A 269-amino-acid polypeptide reads, in one-letter code: Indole-3-glycerol phosphate synthase (269 aa).

This sequence belongs to the TrpC family.

It catalyses the reaction 1-(2-carboxyphenylamino)-1-deoxy-D-ribulose 5-phosphate + H(+) = (1S,2R)-1-C-(indol-3-yl)glycerol 3-phosphate + CO2 + H2O. Its pathway is amino-acid biosynthesis; L-tryptophan biosynthesis; L-tryptophan from chorismate: step 4/5. This chain is Indole-3-glycerol phosphate synthase, found in Saccharopolyspora erythraea (strain ATCC 11635 / DSM 40517 / JCM 4748 / NBRC 13426 / NCIMB 8594 / NRRL 2338).